Here is a 463-residue protein sequence, read N- to C-terminus: Lactadherin (463 aa).

A signal peptide spans 1 to 22 (MQVSRVLAALCGMLLCASGLFA). EGF-like domains lie at 24-61 (SGDFCDSSLCLNGGTCLTGQDNDIYCLCPEGFTGLVCN) and 64-108 (ERGP…IHCE). 3 cysteine pairs are disulfide-bonded: Cys28–Cys39, Cys33–Cys49, and Cys51–Cys60. N-linked (GlcNAc...) asparagine glycosylation occurs at Asn61. Cystine bridges form between Cys68/Cys79, Cys73/Cys96, Cys98/Cys107, Cys148/Cys303, Cys290/Cys294, and Cys308/Cys463. The Cell attachment site motif lies at 87-89 (RGD). F5/8 type C domains follow at residues 148–303 (CSTQ…LLGC) and 308–463 (CSEP…LLGC). The N-linked (GlcNAc...) asparagine glycan is linked to Asn266. 2 N-linked (GlcNAc...) asparagine glycosylation sites follow: Asn316 and Asn426.

In terms of processing, N-glycosylated. Isoform 1 also exists in both an O-glycosylated and a non-O-glycosylated form. Mammary epithelial cell surfaces and spermatozoan. Isoform 2 is present in brain, heart, kidney and spleen and at low levels in lung, liver, small intestine and testis.

The protein localises to the membrane. Its subcellular location is the secreted. It localises to the cytoplasmic vesicle. It is found in the secretory vesicle. The protein resides in the acrosome membrane. Functionally, contributes to phagocytic removal of apoptotic cells in many tissues. Specific ligand for the alpha-v/beta-3 and alpha-v/beta-5 receptors. Also binds to phosphatidylserine-enriched cell surfaces in a receptor-independent manner. Zona pellucida-binding protein which may play a role in gamete interaction. Plays an important role in the maintenance of intestinal epithelial homeostasis and the promotion of mucosal healing. Promotes VEGF-dependent neovascularization. The protein is Lactadherin (Mfge8) of Mus musculus (Mouse).